The sequence spans 114 residues: Hemerythrin subunit 1 (114 aa).

Residues histidine 26, histidine 55, glutamate 59, histidine 74, histidine 78, histidine 102, and aspartate 107 each contribute to the Fe cation site.

The protein belongs to the hemerythrin family.

In terms of biological role, hemerythrin is a respiratory protein in blood cells of certain marine worms. The oxygen-binding site in each chain contains two iron atoms. This is Hemerythrin subunit 1 from Golfingia vulgaris (Marine worm).